Here is a 542-residue protein sequence, read N- to C-terminus: Apolipoprotein N-acyltransferase (542 aa).

Helical transmembrane passes span 26–46 (ASVI…LSLV), 54–74 (IWCL…SWML), 89–109 (LLIS…VLCF), 113–133 (YWGA…VRYY), 163–183 (WAGQ…VLVF), and 187–207 (FSYG…GTYY). One can recognise a CN hydrolase domain in the interval 220–499 (LRVAIVQPGY…PDVLQVSVPV (280 aa)). Catalysis depends on E264, which acts as the Proton acceptor. The active site involves K349. C404 serves as the catalytic Nucleophile. Residues 509–529 (FGDAPLLFVAVSSVLGVVGYF) form a helical membrane-spanning segment.

Belongs to the CN hydrolase family. Apolipoprotein N-acyltransferase subfamily.

The protein localises to the cell inner membrane. It carries out the reaction N-terminal S-1,2-diacyl-sn-glyceryl-L-cysteinyl-[lipoprotein] + a glycerophospholipid = N-acyl-S-1,2-diacyl-sn-glyceryl-L-cysteinyl-[lipoprotein] + a 2-acyl-sn-glycero-3-phospholipid + H(+). It participates in protein modification; lipoprotein biosynthesis (N-acyl transfer). Its function is as follows. Catalyzes the phospholipid dependent N-acylation of the N-terminal cysteine of apolipoprotein, the last step in lipoprotein maturation. In Chlamydia muridarum (strain MoPn / Nigg), this protein is Apolipoprotein N-acyltransferase.